The chain runs to 583 residues: Membrane protein insertase YidC (583 aa).

The next 6 membrane-spanning stretches (helical) occupy residues 5–25 (SVTG…FMSP), 341–361 (PFAE…VSNY), 362–382 (GLII…LSMA), 427–447 (IGGC…FYVF), 473–493 (FGFA…LMAV), and 520–540 (AMML…YLMF).

It belongs to the OXA1/ALB3/YidC family. Type 1 subfamily. As to quaternary structure, interacts with the Sec translocase complex via SecD. Specifically interacts with transmembrane segments of nascent integral membrane proteins during membrane integration.

Its subcellular location is the cell inner membrane. Required for the insertion and/or proper folding and/or complex formation of integral membrane proteins into the membrane. Involved in integration of membrane proteins that insert both dependently and independently of the Sec translocase complex, as well as at least some lipoproteins. Aids folding of multispanning membrane proteins. In Pelodictyon phaeoclathratiforme (strain DSM 5477 / BU-1), this protein is Membrane protein insertase YidC.